The chain runs to 912 residues: Metabotropic glutamate receptor 4 (912 aa).

An N-terminal signal peptide occupies residues 1–32; that stretch reads MSGKGGWAWWWARLPLCLLLSLYGSWVPSSLG. At 33–586 the chain is on the extracellular side; that stretch reads KPKGHPHMNS…PIVKLEWDSP (554 aa). A disulfide bridge links Cys67 with Cys109. The N-linked (GlcNAc...) asparagine glycan is linked to Asn98. L-glutamate-binding positions include Ser159, 180–182, and Tyr230; that span reads AST. 7 disulfides stabilise this stretch: Cys249–Cys538, Cys372–Cys388, Cys428–Cys435, Cys520–Cys539, Cys524–Cys542, Cys545–Cys557, and Cys560–Cys573. Asn301 is a glycosylation site (N-linked (GlcNAc...) asparagine). Asp312 serves as a coordination point for L-glutamate. Position 405 (Lys405) interacts with L-glutamate. A helical membrane pass occupies residues 587–607; the sequence is WAVLPLFLAVVGIAATLFVVV. The Cytoplasmic segment spans residues 608–624; it reads TFVRYNDTPIVKASGRE. A helical membrane pass occupies residues 625-645; it reads LSYVLLAGIFLCYATTFLMIA. At 646 to 653 the chain is on the extracellular side; that stretch reads EPDLGTCS. Residues 654 to 671 form a helical membrane-spanning segment; that stretch reads LRRIFLGLGMSISYAALL. The Cytoplasmic portion of the chain corresponds to 672-699; it reads TKTNRIYRIFEQGKRSVSAPRFISPASQ. Residues 700–720 form a helical membrane-spanning segment; that stretch reads LAITFVLISLQLLCICVWFVV. Topologically, residues 721–751 are extracellular; it reads DPSHSVVDFQDQRTLDPRFARGVLKCDISDL. Residues 752–772 traverse the membrane as a helical segment; it reads SLICLLGYSMLLMVTCTVYAI. At 773-786 the chain is on the cytoplasmic side; sequence KTRGVPETFNEAKP. A helical transmembrane segment spans residues 787–807; that stretch reads IGFTMYTTCIVWLAFIPIFFG. Over 808-826 the chain is Extracellular; the sequence is TSQSADKLYIQTTTLTVSV. The helical transmembrane segment at 827–847 threads the bilayer; sequence SLSASVSLGMLYMPKVYIILF. Residues 848 to 912 are Cytoplasmic-facing; that stretch reads HPEQNVPKRK…TYVTYTNHAI (65 aa).

It belongs to the G-protein coupled receptor 3 family. As to quaternary structure, interacts with PICK1.

It is found in the cell membrane. G-protein coupled receptor for glutamate. Ligand binding causes a conformation change that triggers signaling via guanine nucleotide-binding proteins (G proteins) and modulates the activity of down-stream effectors. Signaling inhibits adenylate cyclase activity. The chain is Metabotropic glutamate receptor 4 (Grm4) from Mus musculus (Mouse).